Here is a 149-residue protein sequence, read N- to C-terminus: Large ribosomal subunit protein bL9 (149 aa).

It belongs to the bacterial ribosomal protein bL9 family.

In terms of biological role, binds to the 23S rRNA. The polypeptide is Large ribosomal subunit protein bL9 (Xanthomonas campestris pv. campestris (strain 8004)).